A 254-amino-acid chain; its full sequence is Phosphatidylglycerophosphatase B (254 aa).

A helical transmembrane segment spans residues 2–24 (RSIARRTAVGAALLLVMPVAVWI). At 25 to 54 (SGWRWQPGEQSWLLKAAFWVTETVTQPWGV) the chain is on the periplasmic side. A helical transmembrane segment spans residues 55–66 (ITHLILFGWFLW). The Cytoplasmic segment spans residues 67–71 (CLRFR). The helical transmembrane segment at 72 to 94 (IKAAFVLFAILAAAILVGQGVKS) threads the bilayer. The Periplasmic portion of the chain corresponds to 95-161 (WIKDKVQEPR…QKETGFAFPS (67 aa)). The phosphatase sequence motif I stretch occupies residues 97 to 105 (KDKVQEPRP). Residues 160-163 (PSGH) are phosphatase sequence motif II. Residues 162–176 (GHTMFAASWALLAVG) traverse the membrane as a helical segment. His163 functions as the Proton donor; for a subset of substrates in the catalytic mechanism. The Cytoplasmic segment spans residues 177 to 182 (LLWPRR). A helical transmembrane segment spans residues 183–202 (RTLTIAILLVWATGVMGSRL). Residues 200–211 (SRLLLGMHWPRD) are phosphatase sequence motif III. At 203–208 (LLGMHW) the chain is on the periplasmic side. His207 acts as the Nucleophile in catalysis. The helical transmembrane segment at 209 to 232 (PRDLVVATLISWALVAVATWLAQR) threads the bilayer. At 233–254 (ICGPLTPPAEENREIAQREQES) the chain is on the cytoplasmic side.

It belongs to the PA-phosphatase related phosphoesterase family. Post-translationally, the N-terminus is blocked.

It is found in the cell inner membrane. The protein localises to the cell outer membrane. The enzyme catalyses a 1,2-diacyl-sn-glycero-3-phospho-(1'-sn-glycero-3'-phosphate) + H2O = a 1,2-diacyl-sn-glycero-3-phospho-(1'-sn-glycerol) + phosphate. It carries out the reaction a 1,2-diacyl-sn-glycerol 3-diphosphate + H2O = a 1,2-diacyl-sn-glycero-3-phosphate + phosphate + H(+). The catalysed reaction is a 1,2-diacyl-sn-glycero-3-phosphate + H2O = a 1,2-diacyl-sn-glycerol + phosphate. It catalyses the reaction di-trans,octa-cis-undecaprenyl diphosphate + H2O = di-trans,octa-cis-undecaprenyl phosphate + phosphate + H(+). It functions in the pathway phospholipid metabolism; phosphatidylglycerol biosynthesis; phosphatidylglycerol from CDP-diacylglycerol: step 2/2. Its function is as follows. Catalyzes the dephosphorylation of diacylglycerol diphosphate (DGPP) to phosphatidate (PA) and the subsequent dephosphorylation of PA to diacylglycerol (DAG). Also has undecaprenyl pyrophosphate phosphatase activity, required for the biosynthesis of the lipid carrier undecaprenyl phosphate. Can also use lysophosphatidic acid (LPA) and phosphatidylglycerophosphate as substrates. The pattern of activities varies according to subcellular location, PGP phosphatase activity is higher in the cytoplasmic membrane, whereas PA and LPA phosphatase activities are higher in the outer membrane. Activity is independent of a divalent cation ion and insensitive to inhibition by N-ethylmaleimide. This is Phosphatidylglycerophosphatase B (pgpB) from Escherichia coli O157:H7.